We begin with the raw amino-acid sequence, 287 residues long: Seed leukoagglutinin (287 aa).

Positions 1-29 are cleaved as a signal peptide; that stretch reads MATSNSKPTQVLLATFLTFFFLLLNNVNS. Tyr74 contributes to the N-acetyl-alpha-neuraminyl-(2-&gt;3)-beta-D-galactosyl-(1-&gt;4)-beta-D-glucose binding site. An N-linked (GlcNAc...) (paucimannose) asparagine glycan is attached at Asn90. N-acetyl-alpha-neuraminyl-(2-&gt;3)-beta-D-galactosyl-(1-&gt;4)-beta-D-glucose-binding residues include Asp116, Ser133, and Lys136. Asn142 is a glycosylation site (N-linked (GlcNAc...) (paucimannose) asparagine). Positions 156 and 158 each coordinate Mn(2+). Residues Asp158, Tyr160, Asp166, and Asp169 each coordinate Ca(2+). N-acetyl-alpha-neuraminyl-(2-&gt;3)-beta-D-galactosyl-(1-&gt;4)-beta-D-glucose is bound by residues Tyr160 and Asp166. Asp169 and His174 together coordinate Mn(2+). N-linked (GlcNAc...) (high mannose) asparagine; partial glycosylation occurs at Asn208. Asn220 is a glycosylation site (N-linked (GlcNAc...) (paucimannose) asparagine; partial). Residue Glu253 participates in N-acetyl-alpha-neuraminyl-(2-&gt;3)-beta-D-galactosyl-(1-&gt;4)-beta-D-glucose binding. A propeptide spans 279–287 (removed in mature form); sequence NVHIARYTA.

This sequence belongs to the leguminous lectin family. Homodimer; disulfide-linked. Dimer of homodimers. In terms of processing, the glycosylation on N-90 is determined to by of the high mannose type in PubMed:26003537, while PubMed:27720757 found a paucimannose at this position. Processed at its C-terminus.

In terms of biological role, sialic acid-binding lectin recognizing oligosaccharides containing terminal sialic acid linked via alpha-2,3 bond to penultimate galactose residues. Binds the trisaccharide sequence Neu5Ac-alpha-2,3-Gal-beta-1,4-GlcNAc. Binds fetuin when fully glycosylated but not when the high mannose-type glycans are removed, although the secondary structure is virtually unaffected by deglycosylation of the high mannose-type glycans. The lectin activity may depend on the presence of a single GlcNAc attached to N-90. In Maackia amurensis (Amur maackia), this protein is Seed leukoagglutinin.